The sequence spans 58 residues: UPF0434 protein Sfri_2386 (58 aa).

This sequence belongs to the UPF0434 family.

The chain is UPF0434 protein Sfri_2386 from Shewanella frigidimarina (strain NCIMB 400).